Consider the following 304-residue polypeptide: uncharacterized protein (304 aa).

Residues Thr58 and Tyr121 each act as charge relay system in the active site. Tyr147 serves as the catalytic Proton donor. Catalysis depends on Lys175, which acts as the Schiff-base intermediate with substrate.

Belongs to the DapA family. Homotetramer.

Its subcellular location is the cytoplasm. This is an uncharacterized protein from Halobacterium salinarum (strain ATCC 29341 / DSM 671 / R1).